The chain runs to 372 residues: Ligninase LG3 (372 aa).

Residues 1–21 (MAFKQLFAAISLALSLSAANA) form the signal peptide. A propeptide spanning residues 22–28 (AAVIEKR) is cleaved from the precursor. 2 disulfide bridges follow: Cys31/Cys43 and Cys62/Cys148. The active-site Proton acceptor is His75. Positions 76, 94, 96, and 98 each coordinate Ca(2+). Position 204 (His204) interacts with heme b. Residues Ser205, Asp222, Thr224, Ile227, and Asp229 each coordinate Ca(2+). A disulfide bridge links Cys277 with Cys345. N-linked (GlcNAc...) asparagine glycosylation occurs at Asn285. Low complexity predominate over residues 350–361 (FPTLTTLPGPET). The interval 350-372 (FPTLTTLPGPETSVQRIPPPPGA) is disordered.

Belongs to the peroxidase family. Ligninase subfamily. The cofactor is heme b. It depends on Ca(2+) as a cofactor.

The enzyme catalyses 1-(3,4-dimethoxyphenyl)-2-(2-methoxyphenoxy)propane-1,3-diol + H2O2 = 3,4-dimethoxybenzaldehyde + guaiacol + glycolaldehyde + H2O. The catalysed reaction is 2 (3,4-dimethoxyphenyl)methanol + H2O2 = 2 (3,4-dimethoxyphenyl)methanol radical + 2 H2O. It participates in secondary metabolite metabolism; lignin degradation. Depolymerization of lignin. Catalyzes the C(alpha)-C(beta) cleavage of the propyl side chains of lignin. The sequence is that of Ligninase LG3 (GLG3) from Phanerodontia chrysosporium (White-rot fungus).